The primary structure comprises 304 residues: Sulfate adenylyltransferase subunit 2 (304 aa).

It belongs to the PAPS reductase family. CysD subfamily. Heterodimer composed of CysD, the smaller subunit, and CysN.

It catalyses the reaction sulfate + ATP + H(+) = adenosine 5'-phosphosulfate + diphosphate. The protein operates within sulfur metabolism; hydrogen sulfide biosynthesis; sulfite from sulfate: step 1/3. With CysN forms the ATP sulfurylase (ATPS) that catalyzes the adenylation of sulfate producing adenosine 5'-phosphosulfate (APS) and diphosphate, the first enzymatic step in sulfur assimilation pathway. APS synthesis involves the formation of a high-energy phosphoric-sulfuric acid anhydride bond driven by GTP hydrolysis by CysN coupled to ATP hydrolysis by CysD. This is Sulfate adenylyltransferase subunit 2 from Halorhodospira halophila (strain DSM 244 / SL1) (Ectothiorhodospira halophila (strain DSM 244 / SL1)).